Consider the following 493-residue polypeptide: Ketol-acid reductoisomerase (NADP(+)) (493 aa).

The KARI N-terminal Rossmann domain occupies 14 to 208; it reads LDQLGRCRFM…GGHRAGVLES (195 aa). Residues 45-48, arginine 68, arginine 76, serine 78, and 108-110 contribute to the NADP(+) site; these read CGAQ and DKQ. Histidine 132 is a catalytic residue. Residue glycine 158 coordinates NADP(+). KARI C-terminal knotted domains follow at residues 209–345 and 346–486; these read SFVA…APKG and ENIK…MTDM. Positions 217, 221, 390, and 394 each coordinate Mg(2+). Serine 415 is a substrate binding site.

This sequence belongs to the ketol-acid reductoisomerase family. The cofactor is Mg(2+).

It carries out the reaction (2R)-2,3-dihydroxy-3-methylbutanoate + NADP(+) = (2S)-2-acetolactate + NADPH + H(+). The enzyme catalyses (2R,3R)-2,3-dihydroxy-3-methylpentanoate + NADP(+) = (S)-2-ethyl-2-hydroxy-3-oxobutanoate + NADPH + H(+). It participates in amino-acid biosynthesis; L-isoleucine biosynthesis; L-isoleucine from 2-oxobutanoate: step 2/4. It functions in the pathway amino-acid biosynthesis; L-valine biosynthesis; L-valine from pyruvate: step 2/4. In terms of biological role, involved in the biosynthesis of branched-chain amino acids (BCAA). Catalyzes an alkyl-migration followed by a ketol-acid reduction of (S)-2-acetolactate (S2AL) to yield (R)-2,3-dihydroxy-isovalerate. In the isomerase reaction, S2AL is rearranged via a Mg-dependent methyl migration to produce 3-hydroxy-3-methyl-2-ketobutyrate (HMKB). In the reductase reaction, this 2-ketoacid undergoes a metal-dependent reduction by NADPH to yield (R)-2,3-dihydroxy-isovalerate. This is Ketol-acid reductoisomerase (NADP(+)) from Histophilus somni (strain 129Pt) (Haemophilus somnus).